The following is a 466-amino-acid chain: MSVVPVVDVLQGRAAVGSEVTVRGWVRTRRDSKAGISFVAVYDGSCFDPLQAVVNNTLPNYQDEVLHLTTGCSVEVTGTVVASPGEGQSFEIQATAINVVGWVDDPDTYPMAAKRHSIEYLREVAHLRPRTNLIGAVARVRHTLAQAIHRFFDENGYFWVSTPLITASDTEGAGEMFRVSTLDLENLPRTDTGAVDFSEDFFGKEAFLTVSGQLNGETYACALSKVYTFGPTFRAENSNTSRHLAEFWMVEPEVAFASLDDVAGLAEKMLKYVFQAVLNERADDMKFFAERVDKDAVDRLQRFVTSDFAQVDYTDAIEILLASGQKFENDVSWGIDLSSEHERYLAEKHFKAPVVVKNYPKDIKAFYMRMNEDGKTVAAMDVLAPGIGEIIGGSQREERLDVLDARLAEMGLNKEDYWWYRDLRRYGTVPHSGFGLGFERLISYVTGVQNVRDVIPFPRTPRNASF.

This sequence belongs to the class-II aminoacyl-tRNA synthetase family. In terms of assembly, homodimer.

The protein localises to the cytoplasm. It carries out the reaction tRNA(Asn) + L-asparagine + ATP = L-asparaginyl-tRNA(Asn) + AMP + diphosphate + H(+). The protein is Asparagine--tRNA ligase of Yersinia pseudotuberculosis serotype O:1b (strain IP 31758).